The chain runs to 430 residues: Adenylosuccinate synthetase (430 aa).

Residues 11 to 17 (GDEGKGK) and 39 to 41 (GHT) contribute to the GTP site. Residue Asp-12 is the Proton acceptor of the active site. Mg(2+) is bound by residues Asp-12 and Gly-39. IMP-binding positions include 12-15 (DEGK), 37-40 (NAGH), Thr-130, Arg-144, Asn-226, Thr-241, and Arg-305. His-40 functions as the Proton donor in the catalytic mechanism. 301-307 (VTTGRKR) is a binding site for substrate. GTP contacts are provided by residues Arg-307, 333 to 335 (KLD), and 415 to 417 (GTG).

Belongs to the adenylosuccinate synthetase family. In terms of assembly, homodimer. The cofactor is Mg(2+).

It localises to the cytoplasm. It carries out the reaction IMP + L-aspartate + GTP = N(6)-(1,2-dicarboxyethyl)-AMP + GDP + phosphate + 2 H(+). It participates in purine metabolism; AMP biosynthesis via de novo pathway; AMP from IMP: step 1/2. In terms of biological role, plays an important role in the de novo pathway and in the salvage pathway of purine nucleotide biosynthesis. Catalyzes the first committed step in the biosynthesis of AMP from IMP. This Scheffersomyces stipitis (strain ATCC 58785 / CBS 6054 / NBRC 10063 / NRRL Y-11545) (Yeast) protein is Adenylosuccinate synthetase.